The sequence spans 335 residues: Tetraacyldisaccharide 4'-kinase (335 aa).

Residue 51–58 (HVGGAGKT) coordinates ATP.

It belongs to the LpxK family.

It carries out the reaction a lipid A disaccharide + ATP = a lipid IVA + ADP + H(+). It participates in glycolipid biosynthesis; lipid IV(A) biosynthesis; lipid IV(A) from (3R)-3-hydroxytetradecanoyl-[acyl-carrier-protein] and UDP-N-acetyl-alpha-D-glucosamine: step 6/6. In terms of biological role, transfers the gamma-phosphate of ATP to the 4'-position of a tetraacyldisaccharide 1-phosphate intermediate (termed DS-1-P) to form tetraacyldisaccharide 1,4'-bis-phosphate (lipid IVA). This Bradyrhizobium sp. (strain ORS 278) protein is Tetraacyldisaccharide 4'-kinase.